The following is a 421-amino-acid chain: Granaticin polyketide putative beta-ketoacyl synthase 1 (421 aa).

In terms of domain architecture, Ketosynthase family 3 (KS3) spans 2 to 416 (TRRVVITGVG…GFQSAMVLHR (415 aa)). Active-site for beta-ketoacyl synthase activity residues include Cys169, His309, and His346.

It belongs to the thiolase-like superfamily. Beta-ketoacyl-ACP synthases family.

It functions in the pathway antibiotic biosynthesis; granaticin biosynthesis. This chain is Granaticin polyketide putative beta-ketoacyl synthase 1 (gra-orf1), found in Streptomyces violaceoruber.